Consider the following 418-residue polypeptide: Peptide chain release factor subunit 1 (418 aa).

Belongs to the eukaryotic release factor 1 family. As to quaternary structure, heterodimer of two subunits, one of which binds GTP.

It localises to the cytoplasm. In terms of biological role, directs the termination of nascent peptide synthesis (translation) in response to the termination codons UAA, UAG and UGA. The chain is Peptide chain release factor subunit 1 from Haloarcula marismortui (strain ATCC 43049 / DSM 3752 / JCM 8966 / VKM B-1809) (Halobacterium marismortui).